The following is an 869-amino-acid chain: Translation initiation factor IF-2 (869 aa).

Disordered regions lie at residues 51–78 (KQHG…NMGK) and 105–277 (EEET…SDLK). Positions 67 to 76 (QRKTTSTLNM) are enriched in polar residues. Residues 110–119 (RALAEQQAQL) show a composition bias toward low complexity. Residues 120–241 (EAEKAAAEEA…KKQEAEEVHV (122 aa)) show a composition bias toward basic and acidic residues. Positions 369–542 (SRAPVVTIMG…ELLDLKAPPT (174 aa)) constitute a tr-type G domain. The G1 stretch occupies residues 378-385 (GHVDHGKT). Position 378 to 385 (378 to 385 (GHVDHGKT)) interacts with GTP. A G2 region spans residues 403 to 407 (GITQH). A G3 region spans residues 424–427 (DTPG). GTP contacts are provided by residues 424–428 (DTPGH) and 478–481 (NKMD). The G4 stretch occupies residues 478 to 481 (NKMD). Residues 514–516 (SAK) are G5.

It belongs to the TRAFAC class translation factor GTPase superfamily. Classic translation factor GTPase family. IF-2 subfamily.

The protein resides in the cytoplasm. Its function is as follows. One of the essential components for the initiation of protein synthesis. Protects formylmethionyl-tRNA from spontaneous hydrolysis and promotes its binding to the 30S ribosomal subunits. Also involved in the hydrolysis of GTP during the formation of the 70S ribosomal complex. The chain is Translation initiation factor IF-2 from Pseudoalteromonas atlantica (strain T6c / ATCC BAA-1087).